Consider the following 114-residue polypeptide: MIARRNPEPLRFLPDEARSLPPPKLTDPRLLYIGFLGYCSGLIDNLIRRRPIATAGLHRQLLYITAFFFAGYYLVKREDYLYAVRDREMFGYMKLHPEDFPEEDVYCCGAERRG.

The helical transmembrane segment at 56–75 threads the bilayer; sequence GLHRQLLYITAFFFAGYYLV.

This sequence belongs to the complex I NDUFC2 subunit family. Complex I is composed of 45 different subunits.

Its subcellular location is the mitochondrion inner membrane. Its function is as follows. Accessory subunit of the mitochondrial membrane respiratory chain NADH dehydrogenase (Complex I), that is believed not to be involved in catalysis. Complex I functions in the transfer of electrons from NADH to the respiratory chain. The immediate electron acceptor for the enzyme is believed to be ubiquinone. The protein is NADH dehydrogenase [ubiquinone] 1 subunit C2, isoform 2 (NDUFC2-KCTD14) of Homo sapiens (Human).